Consider the following 198-residue polypeptide: MNAAKSLSIVPFLDCLSRLKTTPRTGWLYHGIEKPESIADHMYRMGILTMLCNDPSINKERCLKIAVVHDMAESIVGDITPHENVSKEEKHRMESEAMVSITQQLIPLNLSLQAEEIKELFLEYESASTPEAKFVKDIDKFEMIAQMFEYERKFNGEKDLSQFTWAGKLIQHPLVKGWLNDVLQEREQFWASVRQKKL.

The HD domain occupies 38–144 (IADHMYRMGI…VKDIDKFEMI (107 aa)). A divalent metal cation is bound by residues His41, His69, Asp70, Glu73, Asp78, Ile79, and Asp139.

Belongs to the HDDC2 family. In terms of assembly, homodimer. Requires Mn(2+) as cofactor. The cofactor is Co(2+). Mg(2+) is required as a cofactor.

It localises to the cytoplasm. It is found in the nucleus. It catalyses the reaction a 2'-deoxyribonucleoside 5'-phosphate + H2O = a 2'-deoxyribonucleoside + phosphate. Functionally, catalyzes the dephosphorylation of the nucleoside 5'-monophosphates deoxyadenosine monophosphate (dAMP), deoxycytidine monophosphate (dCMP), deoxyguanosine monophosphate (dGMP) and deoxythymidine monophosphate (dTMP). This Schizosaccharomyces pombe (strain 972 / ATCC 24843) (Fission yeast) protein is 5'-deoxynucleotidase hdd1.